We begin with the raw amino-acid sequence, 132 residues long: MHSTIAYVSLLPLALFVAMHGASTDEESEELGASTDVDYEELDANCTCPAPALTSTRNNKHYPLGCIYNCSSYNCTIPDGTPCYVLTLGEVKEHLQIGSTVPNCTCGLCRNGTCVSNGTVEECFAVEEIEET.

The first 24 residues, 1 to 24 (MHSTIAYVSLLPLALFVAMHGAST), serve as a signal peptide directing secretion. N-linked (GlcNAc...) asparagine glycosylation is found at asparagine 45, asparagine 69, asparagine 74, asparagine 103, asparagine 111, and asparagine 117. Intrachain disulfides connect cysteine 48/cysteine 70, cysteine 66/cysteine 109, cysteine 83/cysteine 114, and cysteine 104/cysteine 123.

It is found in the secreted. Its function is as follows. Salivary chemokine-binding protein which binds to host chemokine CCL5. This is Evasin P985 from Amblyomma parvum (South American tick).